We begin with the raw amino-acid sequence, 344 residues long: Alkyl hydroperoxide reductase Rv2159c (344 aa).

An important for interaction with PknI region spans residues 49-50 (AG). Residue C84 is the Cysteine sulfenic acid (-SOH) intermediate of the active site.

The protein belongs to the AhpD family. As to quaternary structure, interacts with the serine/threonine-protein kinase PknI. The PknI-Rv2159c interaction is mediated through phosphorylation independent physical interaction.

Its activity is regulated as follows. Interaction with PknI increases the peroxidase activity by several folds. Functionally, involved in protection against oxidative stresses. May play a significant role in maintaining the cellular homeostasis during stress and virulence of M.tuberculosis. In vitro, catalyzes the decomposition of cumene hydroperoxide (CHP) to acetophenone. This chain is Alkyl hydroperoxide reductase Rv2159c, found in Mycobacterium tuberculosis (strain ATCC 25618 / H37Rv).